A 192-amino-acid polypeptide reads, in one-letter code: Phosphoheptose isomerase (192 aa).

Residues Leu37–Lys192 form the SIS domain. Residue Asn52–Gly54 participates in substrate binding. Positions 61 and 65 each coordinate Zn(2+). Substrate-binding positions include Glu65, Asn93–Asp94, Ser119–Ser121, Ser124, and Gln172. Zn(2+)-binding residues include Gln172 and His180.

Belongs to the SIS family. GmhA subfamily. In terms of assembly, homotetramer. It depends on Zn(2+) as a cofactor.

It localises to the cytoplasm. The enzyme catalyses 2 D-sedoheptulose 7-phosphate = D-glycero-alpha-D-manno-heptose 7-phosphate + D-glycero-beta-D-manno-heptose 7-phosphate. It participates in carbohydrate biosynthesis; D-glycero-D-manno-heptose 7-phosphate biosynthesis; D-glycero-alpha-D-manno-heptose 7-phosphate and D-glycero-beta-D-manno-heptose 7-phosphate from sedoheptulose 7-phosphate: step 1/1. In terms of biological role, catalyzes the isomerization of sedoheptulose 7-phosphate in D-glycero-D-manno-heptose 7-phosphate. The polypeptide is Phosphoheptose isomerase (Enterobacter sp. (strain 638)).